A 421-amino-acid polypeptide reads, in one-letter code: Alpha-tubulin N-acetyltransferase 1 (421 aa).

Residues 1-190 (MEFPFDVDAL…NNFVIFEGFF (190 aa)) enclose the N-acetyltransferase domain. K56 carries the post-translational modification N6-acetyllysine; by autocatalysis. Acetyl-CoA is bound at residue 124–137 (FYIHESVQRHGHGR). K146 carries the post-translational modification N6-acetyllysine; by autocatalysis. Residue 160–169 (SPKLLKFLNK) participates in acetyl-CoA binding. Residues 214 to 235 (PIPAAPARKLPPKRAEGDIKPY) form a disordered region. The span at 226 to 235 (KRAEGDIKPY) shows a compositional bias: basic and acidic residues. Residues K233 and K244 each carry the N6-acetyllysine; by autocatalysis modification. The tract at residues 252–284 (PLNRAPRRATPPAHPPPRSSSLGNSPDRGPLRP) is disordered. 2 positions are modified to phosphoserine: S272 and S276. R305 bears the Asymmetric dimethylarginine mark. At S315 the chain carries Phosphoserine. Residue R323 is modified to Omega-N-methylarginine. The segment covering 342–351 (FNTSFLGTGN) has biased composition (polar residues). Positions 342-398 (FNTSFLGTGNQERKQGEQEAEDRSASEDQVLLQDGSGEEPTHTVAPRAQAPPAQSWM) are disordered. Over residues 352 to 367 (QERKQGEQEAEDRSAS) the composition is skewed to basic and acidic residues.

The protein belongs to the acetyltransferase ATAT1 family. Component of the BBSome complex. Interacts with AP2 alpha-adaptins, including AP2A2, but not with AP1 gamma-adaptin (AP1G1/AP1G2); this interaction is required for efficient alpha-tubulin acetylation, hence clathrin-coated pits are sites of microtubule acetylation. In terms of processing, autoacetylation strongly increases tubulin acetylation.

It is found in the cytoplasm. The protein resides in the membrane. Its subcellular location is the clathrin-coated pit. It localises to the cell junction. The protein localises to the focal adhesion. It is found in the cell projection. The protein resides in the axon. Its subcellular location is the cytoskeleton. It localises to the spindle. The catalysed reaction is L-lysyl-[alpha-tubulin] + acetyl-CoA = N(6)-acetyl-L-lysyl-[alpha-tubulin] + CoA + H(+). Functionally, specifically acetylates 'Lys-40' in alpha-tubulin on the lumenal side of microtubules. Promotes microtubule destabilization and accelerates microtubule dynamics; this activity may be independent of acetylation activity. Acetylates alpha-tubulin with a slow enzymatic rate, due to a catalytic site that is not optimized for acetyl transfer. Enters the microtubule through each end and diffuses quickly throughout the lumen of microtubules. Acetylates only long/old microtubules because of its slow acetylation rate since it does not have time to act on dynamically unstable microtubules before the enzyme is released. Required for normal sperm flagellar function. Promotes directional cell locomotion and chemotaxis, through AP2A2-dependent acetylation of alpha-tubulin at clathrin-coated pits that are concentrated at the leading edge of migrating cells. May facilitate primary cilium assembly. This is Alpha-tubulin N-acetyltransferase 1 from Rattus norvegicus (Rat).